Reading from the N-terminus, the 182-residue chain is uncharacterized protein (182 aa).

Positions 1–23 are enriched in polar residues; sequence MILSDQNFLQTQWKEPQTAQSKN. A disordered region spans residues 1 to 33; sequence MILSDQNFLQTQWKEPQTAQSKNTESKCEFHGN.

The protein belongs to the peptidase M24 family.

This is an uncharacterized protein from Caenorhabditis elegans.